The chain runs to 165 residues: UPF0303 protein Bamb_1459 (165 aa).

The protein belongs to the UPF0303 family.

This chain is UPF0303 protein Bamb_1459, found in Burkholderia ambifaria (strain ATCC BAA-244 / DSM 16087 / CCUG 44356 / LMG 19182 / AMMD) (Burkholderia cepacia (strain AMMD)).